We begin with the raw amino-acid sequence, 250 residues long: UPF0014 membrane protein YjkA (250 aa).

6 helical membrane passes run 3–23 (YLSL…SKSF), 32–52 (IIAT…LSLI), 57–77 (HPVF…QNVI), 91–111 (FAAL…LHII), 117–137 (YVIP…SLFL), and 214–234 (LLIV…LSVL).

Belongs to the UPF0014 family.

It is found in the cell membrane. This is UPF0014 membrane protein YjkA (yjkA) from Bacillus subtilis (strain 168).